The sequence spans 112 residues: Large ribosomal subunit protein uL22 (112 aa).

The protein belongs to the universal ribosomal protein uL22 family. As to quaternary structure, part of the 50S ribosomal subunit.

In terms of biological role, this protein binds specifically to 23S rRNA; its binding is stimulated by other ribosomal proteins, e.g. L4, L17, and L20. It is important during the early stages of 50S assembly. It makes multiple contacts with different domains of the 23S rRNA in the assembled 50S subunit and ribosome. Its function is as follows. The globular domain of the protein is located near the polypeptide exit tunnel on the outside of the subunit, while an extended beta-hairpin is found that lines the wall of the exit tunnel in the center of the 70S ribosome. This Sorangium cellulosum (strain So ce56) (Polyangium cellulosum (strain So ce56)) protein is Large ribosomal subunit protein uL22.